We begin with the raw amino-acid sequence, 1358 residues long: DNA-directed RNA polymerase subunit beta (1358 aa).

The protein belongs to the RNA polymerase beta chain family. As to quaternary structure, the RNAP catalytic core consists of 2 alpha, 1 beta, 1 beta' and 1 omega subunit. When a sigma factor is associated with the core the holoenzyme is formed, which can initiate transcription.

The catalysed reaction is RNA(n) + a ribonucleoside 5'-triphosphate = RNA(n+1) + diphosphate. DNA-dependent RNA polymerase catalyzes the transcription of DNA into RNA using the four ribonucleoside triphosphates as substrates. This Francisella tularensis subsp. mediasiatica (strain FSC147) protein is DNA-directed RNA polymerase subunit beta.